A 446-amino-acid polypeptide reads, in one-letter code: Dihydroorotate dehydrogenase (quinone), mitochondrial (446 aa).

A mitochondrion-targeting transit peptide spans 1–13 (MHSRPLPTLGRHA). Residues 40–57 (AILYTAGILGGAFAGYYL) traverse the membrane as a helical segment. FMN contacts are provided by residues 125–129 (AGLDK) and serine 149. Lysine 129 provides a ligand contact to substrate. 174-178 (NRYGF) contributes to the substrate binding site. 2 residues coordinate FMN: asparagine 222 and asparagine 252. Residues asparagine 252 and 252 to 257 (NVSSPN) each bind substrate. The Nucleophile role is filled by serine 255. Lysine 303 and serine 331 together coordinate FMN. Position 332-333 (332-333 (NT)) interacts with substrate. FMN-binding positions include glycine 357, glycine 387, and 408 to 409 (YT).

It belongs to the dihydroorotate dehydrogenase family. Type 2 subfamily. FMN serves as cofactor.

It is found in the mitochondrion inner membrane. It catalyses the reaction (S)-dihydroorotate + a quinone = orotate + a quinol. It functions in the pathway pyrimidine metabolism; UMP biosynthesis via de novo pathway; orotate from (S)-dihydroorotate (quinone route): step 1/1. The activity is dependent of the presence of oxygen. In terms of biological role, catalyzes the conversion of dihydroorotate to orotate with quinone as electron acceptor. The polypeptide is Dihydroorotate dehydrogenase (quinone), mitochondrial (URA9) (Lachancea kluyveri (strain ATCC 58438 / CBS 3082 / BCRC 21498 / NBRC 1685 / JCM 7257 / NCYC 543 / NRRL Y-12651) (Yeast)).